A 138-amino-acid chain; its full sequence is Large ribosomal subunit protein bL12c (138 aa).

Belongs to the bacterial ribosomal protein bL12 family. As to quaternary structure, homodimer. Part of the ribosomal stalk of the 50S ribosomal subunit. Forms a multimeric L10(L12)X complex, where L10 forms an elongated spine to which 2 to 4 L12 dimers bind in a sequential fashion. Binds GTP-bound translation factors.

The protein localises to the plastid. Its function is as follows. Forms part of the ribosomal stalk which helps the ribosome interact with GTP-bound translation factors. Is thus essential for accurate translation. The protein is Large ribosomal subunit protein bL12c of Euglena longa (Euglenophycean alga).